A 166-amino-acid polypeptide reads, in one-letter code: Shikimate kinase (166 aa).

Position 11–16 (11–16 (GSGKST)) interacts with ATP. Serine 15 is a binding site for Mg(2+). Positions 33, 57, and 79 each coordinate substrate. Position 117 (arginine 117) interacts with ATP. Arginine 134 serves as a coordination point for substrate.

This sequence belongs to the shikimate kinase family. In terms of assembly, monomer. Mg(2+) serves as cofactor.

The protein localises to the cytoplasm. It carries out the reaction shikimate + ATP = 3-phosphoshikimate + ADP + H(+). It functions in the pathway metabolic intermediate biosynthesis; chorismate biosynthesis; chorismate from D-erythrose 4-phosphate and phosphoenolpyruvate: step 5/7. In terms of biological role, catalyzes the specific phosphorylation of the 3-hydroxyl group of shikimic acid using ATP as a cosubstrate. This is Shikimate kinase from Sulfurihydrogenibium sp. (strain YO3AOP1).